A 374-amino-acid polypeptide reads, in one-letter code: PqqA peptide cyclase (374 aa).

The Radical SAM core domain occupies 7-222 (VTPPLWLLAE…VADYRQRMGA (216 aa)). Positions 21, 25, and 28 each coordinate [4Fe-4S] cluster.

It belongs to the radical SAM superfamily. PqqE family. In terms of assembly, interacts with PqqD. The interaction is necessary for activity of PqqE. Requires [4Fe-4S] cluster as cofactor.

It carries out the reaction [PQQ precursor protein] + S-adenosyl-L-methionine = E-Y cross-linked-[PQQ precursor protein] + 5'-deoxyadenosine + L-methionine + H(+). It functions in the pathway cofactor biosynthesis; pyrroloquinoline quinone biosynthesis. Functionally, catalyzes the cross-linking of a glutamate residue and a tyrosine residue in the PqqA protein as part of the biosynthesis of pyrroloquinoline quinone (PQQ). This is PqqA peptide cyclase from Kluyvera intermedia (Enterobacter intermedius).